The following is a 284-amino-acid chain: MYVVSTKQMLNNAQRGGYAVPAFNIHNLETMQVVVETAASMHAPVIIAGTPGTFTHAGTENLMALVSAMAKQYHHPLVIHLDHHTKFDDIAQKVRSGVRSVMIDASHLPFAQNISRVKEVVDFCHRFDVSVEAELGQLGGQEDDVQVNEADAFYTNPVQAREFAEATGIDSLAVAIGTAHGMYARAPALDFSRLENIRQWVNLPLVLHGASGLSTKDIQQTIKLGICKINVATELKNAFSQALKNYLTEHPEATDPRDYLQSAKSAMRDVVSKVIADCGCEGRA.

The active-site Proton donor is the Asp82. The Zn(2+) site is built by His83 and His180. Dihydroxyacetone phosphate is bound at residue Gly181. His208 is a binding site for Zn(2+). Dihydroxyacetone phosphate is bound by residues 209-211 (GAS) and 230-233 (NVAT).

It belongs to the class II fructose-bisphosphate aldolase family. TagBP aldolase GatY subfamily. Forms a complex with GatZ. It depends on Zn(2+) as a cofactor.

The enzyme catalyses D-tagatofuranose 1,6-bisphosphate = D-glyceraldehyde 3-phosphate + dihydroxyacetone phosphate. Its pathway is carbohydrate metabolism; D-tagatose 6-phosphate degradation; D-glyceraldehyde 3-phosphate and glycerone phosphate from D-tagatose 6-phosphate: step 2/2. In terms of biological role, catalytic subunit of the tagatose-1,6-bisphosphate aldolase GatYZ, which catalyzes the reversible aldol condensation of dihydroxyacetone phosphate (DHAP or glycerone-phosphate) with glyceraldehyde 3-phosphate (G3P) to produce tagatose 1,6-bisphosphate (TBP). Requires GatZ subunit for full activity and stability. Is involved in the catabolism of galactitol. This chain is D-tagatose-1,6-bisphosphate aldolase subunit GatY, found in Escherichia coli O6:H1 (strain CFT073 / ATCC 700928 / UPEC).